The chain runs to 74 residues: Small ribosomal subunit protein bS21 (74 aa).

This sequence belongs to the bacterial ribosomal protein bS21 family.

The sequence is that of Small ribosomal subunit protein bS21 from Coxiella burnetii (strain Dugway 5J108-111).